The primary structure comprises 82 residues: UPF0153 protein VC_1057 (82 aa).

The protein belongs to the UPF0153 family.

This chain is UPF0153 protein VC_1057, found in Vibrio cholerae serotype O1 (strain ATCC 39315 / El Tor Inaba N16961).